A 187-amino-acid polypeptide reads, in one-letter code: Cell division protein SepF (187 aa).

The segment at 21–97 is disordered; it reads EVEVPDKQQQ…ATPNNASQES (77 aa). Composition is skewed to polar residues over residues 38-63 and 70-97; these read EQSQQTTKQNAIKSVPQKSASRYTTT and RMSNYSKNNSRNVVTMNNATPNNASQES.

Belongs to the SepF family. As to quaternary structure, homodimer. Interacts with FtsZ.

It localises to the cytoplasm. Its function is as follows. Cell division protein that is part of the divisome complex and is recruited early to the Z-ring. Probably stimulates Z-ring formation, perhaps through the cross-linking of FtsZ protofilaments. Its function overlaps with FtsA. The chain is Cell division protein SepF from Staphylococcus aureus (strain MRSA252).